The following is a 402-amino-acid chain: Dihydrolipoyllysine-residue acetyltransferase component of pyruvate dehydrogenase complex (402 aa).

The 69-residue stretch at 1–69 (MPDIGLEEVE…KTSSIIMIFK (69 aa)) folds into the Lipoyl-binding domain. Lysine 35 is subject to N6-lipoyllysine. In terms of domain architecture, Peripheral subunit-binding (PSBD) spans 109–146 (HATPVVRRLARHLNVDLKNITPSGPKNRILKEDIELYI). Residue histidine 375 is part of the active site.

It belongs to the 2-oxoacid dehydrogenase family. Forms a 24-polypeptide structural core with octahedral symmetry. (R)-lipoate serves as cofactor.

It carries out the reaction N(6)-[(R)-dihydrolipoyl]-L-lysyl-[protein] + acetyl-CoA = N(6)-[(R)-S(8)-acetyldihydrolipoyl]-L-lysyl-[protein] + CoA. In terms of biological role, the pyruvate dehydrogenase complex catalyzes the overall conversion of pyruvate to acetyl-CoA and CO(2). It contains multiple copies of three enzymatic components: pyruvate dehydrogenase (E1), dihydrolipoamide acetyltransferase (E2) and lipoamide dehydrogenase (E3). The protein is Dihydrolipoyllysine-residue acetyltransferase component of pyruvate dehydrogenase complex (aceF) of Buchnera aphidicola subsp. Schizaphis graminum (strain Sg).